Consider the following 504-residue polypeptide: Activin receptor type-1-like (504 aa).

Positions 1-20 (MTLGIFRRVFLMLSVALGLT) are cleaved as a signal peptide. Residues 21–121 (KGDLVKPSRG…EEPEVDAHLP (101 aa)) lie on the Extracellular side of the membrane. N34 is a glycosylation site (N-linked (GlcNAc...) asparagine). Disulfide bonds link C35/C52, C37/C42, and C47/C70. The segment at 74-77 (NQEL) is mediates specificity for BMP ligand. 2 disulfide bridges follow: C78–C90 and C91–C96. An N-linked (GlcNAc...) asparagine glycan is attached at N99. A helical transmembrane segment spans residues 122-142 (LILGPVLALLVLVALGTLGLW). Topologically, residues 143–504 (RVRRRQEKQR…QNPEKPKVIH (362 aa)) are cytoplasmic. Residues S156, S161, and S162 each carry the phosphoserine modification. The GS domain occupies 173–202 (SMLGDFLVSDCTTGSGSGLPFLVQRTVARQ). One can recognise a Protein kinase domain in the interval 203–504 (VALVECVGKG…QNPEKPKVIH (302 aa)). Residues 209–217 (VGKGRYGEV) and K230 each bind ATP. Residue D331 is the Proton acceptor of the active site.

This sequence belongs to the protein kinase superfamily. TKL Ser/Thr protein kinase family. TGFB receptor subfamily. In terms of assembly, interacts with TSC22D1/TSC-22. The cofactor is Mg(2+). Mn(2+) is required as a cofactor. As to expression, urogenital ridge, testis, ovary, brain and lung. In lung, found exclusively in pulmonary vessels of all sizes. Also expressed in aorta, vena cava and certain blood vessels of kidney, spleen, heart and intestine. For most blood vessels, a higher level of expression is found in endothelium than in adjacent smooth muscle.

Its subcellular location is the cell membrane. It carries out the reaction L-threonyl-[receptor-protein] + ATP = O-phospho-L-threonyl-[receptor-protein] + ADP + H(+). The catalysed reaction is L-seryl-[receptor-protein] + ATP = O-phospho-L-seryl-[receptor-protein] + ADP + H(+). Its function is as follows. Type I receptor for TGF-beta family ligands BMP9/GDF2 and BMP10 and important regulator of normal blood vessel development. On ligand binding, forms a receptor complex consisting of two type II and two type I transmembrane serine/threonine kinases. Type II receptors phosphorylate and activate type I receptors which autophosphorylate, then bind and activate SMAD transcriptional regulators. May bind activin as well. This chain is Activin receptor type-1-like (Acvrl1), found in Rattus norvegicus (Rat).